A 314-amino-acid chain; its full sequence is tRNA selenocysteine 1-associated protein 1 (314 aa).

RRM domains lie at 2 to 85 (NSLW…RSNY) and 94 to 173 (FSLF…LASS).

This sequence belongs to the RRM TRSPAP family.

It is found in the nucleus. The protein localises to the cytoplasm. Functionally, involved in the early steps of selenocysteine biosynthesis and tRNA(Sec) charging to the later steps resulting in the cotranslational incorporation of selenocysteine into selenoproteins. The protein is tRNA selenocysteine 1-associated protein 1 of Danio rerio (Zebrafish).